We begin with the raw amino-acid sequence, 471 residues long: UDP-N-acetylmuramoylalanine--D-glutamate ligase (471 aa).

135-141 lines the ATP pocket; sequence GTNGKTT.

This sequence belongs to the MurCDEF family.

The protein localises to the cytoplasm. The catalysed reaction is UDP-N-acetyl-alpha-D-muramoyl-L-alanine + D-glutamate + ATP = UDP-N-acetyl-alpha-D-muramoyl-L-alanyl-D-glutamate + ADP + phosphate + H(+). It participates in cell wall biogenesis; peptidoglycan biosynthesis. In terms of biological role, cell wall formation. Catalyzes the addition of glutamate to the nucleotide precursor UDP-N-acetylmuramoyl-L-alanine (UMA). The polypeptide is UDP-N-acetylmuramoylalanine--D-glutamate ligase (Frankia casuarinae (strain DSM 45818 / CECT 9043 / HFP020203 / CcI3)).